A 496-amino-acid polypeptide reads, in one-letter code: L-arabinose isomerase (496 aa).

Residues E302, E329, H346, and H445 each coordinate Mn(2+).

Belongs to the arabinose isomerase family. The cofactor is Mn(2+).

The enzyme catalyses beta-L-arabinopyranose = L-ribulose. The protein operates within carbohydrate degradation; L-arabinose degradation via L-ribulose; D-xylulose 5-phosphate from L-arabinose (bacterial route): step 1/3. Catalyzes the conversion of L-arabinose to L-ribulose. This chain is L-arabinose isomerase, found in Thermotoga maritima (strain ATCC 43589 / DSM 3109 / JCM 10099 / NBRC 100826 / MSB8).